We begin with the raw amino-acid sequence, 158 residues long: Disease resistance response protein Pi49 (158 aa).

This sequence belongs to the BetVI family.

This is Disease resistance response protein Pi49 (DRR49A) from Pisum sativum (Garden pea).